The primary structure comprises 373 residues: Mannan endo-1,4-beta-mannosidase A (373 aa).

The first 17 residues, 1-17 (MKGLFAFGLGLLSLVNA), serve as a signal peptide directing secretion. Substrate is bound by residues tryptophan 81, asparagine 193, and 194 to 196 (EPR). Catalysis depends on glutamate 194, which acts as the Proton donor/acceptor. Residues cysteine 197 and cysteine 200 are joined by a disulfide bond. Substrate-binding residues include glutamate 230, tyrosine 267, and tryptophan 271. A disulfide bridge connects residues cysteine 289 and cysteine 296. Catalysis depends on glutamate 300, which acts as the Nucleophile. The cysteines at positions 308 and 359 are disulfide-linked. Tryptophan 332 contributes to the substrate binding site.

This sequence belongs to the glycosyl hydrolase 5 (cellulase A) family. Monomer. Post-translationally, not glycosylated.

It is found in the secreted. The enzyme catalyses Random hydrolysis of (1-&gt;4)-beta-D-mannosidic linkages in mannans, galactomannans and glucomannans.. Functionally, endo-1,4-mannanase that catalyzes the random hydrolysis of (1-&gt;4)-beta-D-mannosidic linkages in mannans and heteromannans. It is a crucial enzyme for depolymerization of seed galactomannans and wood galactoglucomannans. Hydrolyzes structurally different mannan polysaccharides, such as galactomannans, glucomannans, and beta-1,4-mannans from different sources, yielding principally mannobiose. Also has transglycosylation activity. The polypeptide is Mannan endo-1,4-beta-mannosidase A (Podospora anserina (strain S / ATCC MYA-4624 / DSM 980 / FGSC 10383) (Pleurage anserina)).